We begin with the raw amino-acid sequence, 484 residues long: uncharacterized protein (484 aa).

Positions 47-226 constitute an FAD-binding PCMH-type domain; it reads TLPIPAAVVK…TEVTVKIFKF (180 aa).

It belongs to the FAD-binding oxidoreductase/transferase type 4 family.

This is an uncharacterized protein from Escherichia coli O157:H7.